An 85-amino-acid polypeptide reads, in one-letter code: Small ribosomal subunit protein bS16 (85 aa).

It belongs to the bacterial ribosomal protein bS16 family.

The chain is Small ribosomal subunit protein bS16 from Xanthomonas euvesicatoria pv. vesicatoria (strain 85-10) (Xanthomonas campestris pv. vesicatoria).